The following is a 689-amino-acid chain: Homoaconitase, mitochondrial (689 aa).

The N-terminal 17 residues, 1 to 17 (MVVLRRSFHVYTRLQRG), are a transit peptide targeting the mitochondrion. Cys-336, Cys-403, and Cys-406 together coordinate [4Fe-4S] cluster.

The protein belongs to the aconitase/IPM isomerase family. Requires [4Fe-4S] cluster as cofactor.

It is found in the mitochondrion. The catalysed reaction is (2R,3S)-homoisocitrate = cis-homoaconitate + H2O. Its pathway is amino-acid biosynthesis; L-lysine biosynthesis via AAA pathway; L-alpha-aminoadipate from 2-oxoglutarate: step 3/5. Catalyzes the reversible hydration of cis-homoaconitate to (2R,3S)-homoisocitrate, a step in the alpha-aminoadipate pathway for lysine biosynthesis. The polypeptide is Homoaconitase, mitochondrial (LYS4) (Candida glabrata (strain ATCC 2001 / BCRC 20586 / JCM 3761 / NBRC 0622 / NRRL Y-65 / CBS 138) (Yeast)).